A 443-amino-acid polypeptide reads, in one-letter code: D(2) dopamine receptor (443 aa).

The Extracellular portion of the chain corresponds to 1-37 (MDPLNLSWYDDDLERQNWSRPFNGSDGKADRPHYNYY). Residues Asn-5, Asn-17, and Asn-23 are each glycosylated (N-linked (GlcNAc...) asparagine). Residues 38–60 (ATLLTLLIAVIVFGNVLVCMAVS) traverse the membrane as a helical segment. The Cytoplasmic portion of the chain corresponds to 61 to 70 (REKALQTTTN). Residues 71-93 (YLIVSLAVADLLVATLVMPWVVY) form a helical membrane-spanning segment. The Extracellular portion of the chain corresponds to 94 to 108 (LEVVGEWKFSRIHCD). Cys-107 and Cys-182 are oxidised to a cystine. Residues 109-130 (IFVTLDVMMCTASILNLCAISI) traverse the membrane as a helical segment. Topologically, residues 131–151 (DRYTAVAMPMLYNTRYSSKRR) are cytoplasmic. The helical transmembrane segment at 152–172 (VTVMISIVWVLSFTISCPLLF) threads the bilayer. At 173–188 (GLNNADQNECIIANPA) the chain is on the extracellular side. A helical transmembrane segment spans residues 189 to 213 (FVVYSSIVSFYVPFIVTLLVYIKIY). The segment at 211–373 (KIYIVLRRRR…SQQKEKKATQ (163 aa)) is interaction with PPP1R9B. At 214-373 (IVLRRRRKRV…SQQKEKKATQ (160 aa)) the chain is on the cytoplasmic side. Residues 281–332 (MEMLSSTSPPERTRYSPIPPSHHQLTLPDPSHHGLHSTPDSPAKPEKNGHAK) form a disordered region. Residues 323 to 332 (AKPEKNGHAK) are compositionally biased toward basic and acidic residues. Residues 374–395 (MLAIVLGVFIICWLPFFITHIL) form a helical membrane-spanning segment. Over 396–409 (NIHCDCNIPPVLYS) the chain is Extracellular. Cys-399 and Cys-401 are disulfide-bonded. Residues 410-431 (AFTWLGYVNSAVNPIIYTTFNI) traverse the membrane as a helical segment. The Cytoplasmic portion of the chain corresponds to 432-443 (EFRKAFLKILHC). Cys-443 carries the S-palmitoyl cysteine lipid modification.

Belongs to the G-protein coupled receptor 1 family. In terms of assembly, forms homo- and heterooligomers with DRD4. The interaction with DRD4 may modulate agonist-induced downstream signaling. Interacts with CADPS and CADPS2. Interacts with GPRASP1, PPP1R9B and CLIC6. Interacts with ARRB2. Interacts with HTR2A. Interacts with GNAI2 isoform sGi2, the interaction allows the creation of an intracellular pool of DRD2 that can be released to cell surface upon agonist stimulation. Interacts with DRD1. Interacts with KCNA2. Palmitoylated. Palmitoylation which is required for proper localization to the plasma membrane and stability of the receptor could be carried on by ZDHHC4, ZDHHC3 and ZDHHC8. In terms of tissue distribution, expressed in the anterior pituitary gland.

The protein resides in the cell membrane. It is found in the golgi apparatus membrane. Functionally, dopamine receptor whose activity is mediated by G proteins which inhibit adenylyl cyclase. Positively regulates postnatal regression of retinal hyaloid vessels via suppression of VEGFR2/KDR activity, downstream of OPN5. The polypeptide is D(2) dopamine receptor (DRD2) (Homo sapiens (Human)).